The primary structure comprises 344 residues: Ig alpha chain C region (344 aa).

The Ig-like 1 domain maps to 6 to 99 (PTIYPLTLPP…SNPVQELDVN (94 aa)). Disulfide bonds link Cys-26/Cys-84 and Cys-76/Cys-100. Asn-38 and Asn-99 each carry an N-linked (GlcNAc...) asparagine glycan. A glycan (O-linked (GalNAc) serine; in variant MOPC 47A) is linked at Ser-101. Disulfide bonds link Cys-114/Cys-171 and Cys-138/Cys-195. Ig-like domains lie at 116 to 206 (PSLS…GTLT) and 219 to 321 (PQVH…KTID). Residue Asn-329 is glycosylated (N-linked (GlcNAc...) asparagine). A glycan (N-linked (GlcNAc...) asparagine; in variant M511) is linked at Ser-331.

In terms of biological role, ig alpha is the major immunoglobulin class in body secretions. It may serve both to defend against local infection and to prevent access of foreign antigens to the general immunologic system. The polypeptide is Ig alpha chain C region (Mus musculus (Mouse)).